Here is a 59-residue protein sequence, read N- to C-terminus: Large ribosomal subunit protein bL32 (59 aa).

This sequence belongs to the bacterial ribosomal protein bL32 family.

This Desulfitobacterium hafniense (strain Y51) protein is Large ribosomal subunit protein bL32.